We begin with the raw amino-acid sequence, 612 residues long: Sulfite reductase [NADPH] flavoprotein alpha-component (612 aa).

A Flavodoxin-like domain is found at 64-202 (VTLISASQTG…QAQQWRQQVV (139 aa)). FMN is bound by residues 70–75 (SQTGNA), 117–120 (STQG), and 153–162 (LGDTSYEHFC). Residues 247 to 461 (TAPLTAQLSV…IEHNDNFRLP (215 aa)) enclose the FAD-binding FR-type domain. FAD-binding positions include Thr-335, Lys-369, 399 to 402 (RLYS), 417 to 419 (TVG), Tyr-423, and 432 to 435 (GGAS). NADP(+) contacts are provided by residues 532-533 (SR), 538-542 (KIYVQ), and Asp-574. FAD is bound at residue Tyr-612.

It belongs to the NADPH-dependent sulphite reductase flavoprotein subunit CysJ family. In the N-terminal section; belongs to the flavodoxin family. The protein in the C-terminal section; belongs to the flavoprotein pyridine nucleotide cytochrome reductase family. As to quaternary structure, alpha(8)-beta(8). The alpha component is a flavoprotein, the beta component is a hemoprotein. It depends on FAD as a cofactor. FMN is required as a cofactor.

It catalyses the reaction hydrogen sulfide + 3 NADP(+) + 3 H2O = sulfite + 3 NADPH + 4 H(+). It functions in the pathway sulfur metabolism; hydrogen sulfide biosynthesis; hydrogen sulfide from sulfite (NADPH route): step 1/1. Functionally, component of the sulfite reductase complex that catalyzes the 6-electron reduction of sulfite to sulfide. This is one of several activities required for the biosynthesis of L-cysteine from sulfate. The flavoprotein component catalyzes the electron flow from NADPH -&gt; FAD -&gt; FMN to the hemoprotein component. The protein is Sulfite reductase [NADPH] flavoprotein alpha-component of Yersinia pseudotuberculosis serotype O:1b (strain IP 31758).